Here is an 860-residue protein sequence, read N- to C-terminus: Beta-glucosidase 1 (860 aa).

An N-terminal signal peptide occupies residues 1–19 (MKLSWLEAAALTAASVVSA). Residues Asn61, Asn211, and Asn252 are each glycosylated (N-linked (GlcNAc...) asparagine). Residue Asp280 is part of the active site. Residues Asn315, Asn322, Asn354, Asn387, Asn442, Asn523, Asn542, Asn564, Asn658, Asn668, Asn690, and Asn712 are each glycosylated (N-linked (GlcNAc...) asparagine).

It belongs to the glycosyl hydrolase 3 family.

The catalysed reaction is Hydrolysis of terminal, non-reducing beta-D-glucosyl residues with release of beta-D-glucose.. The protein operates within glycan metabolism; cellulose degradation. This Aspergillus aculeatus protein is Beta-glucosidase 1.